We begin with the raw amino-acid sequence, 496 residues long: Glycogen synthase (496 aa).

An ADP-alpha-D-glucose-binding site is contributed by lysine 24.

This sequence belongs to the glycosyltransferase 1 family. Bacterial/plant glycogen synthase subfamily.

It catalyses the reaction [(1-&gt;4)-alpha-D-glucosyl](n) + ADP-alpha-D-glucose = [(1-&gt;4)-alpha-D-glucosyl](n+1) + ADP + H(+). The protein operates within glycan biosynthesis; glycogen biosynthesis. In terms of biological role, synthesizes alpha-1,4-glucan chains using ADP-glucose. The chain is Glycogen synthase from Nitrosospira multiformis (strain ATCC 25196 / NCIMB 11849 / C 71).